The chain runs to 237 residues: B3 domain-containing protein At1g20600 (237 aa).

The segment at 53-79 (LVSQANQKQSRKREEKTEKNQPKRVKN) is disordered. Over residues 64–73 (KREEKTEKNQ) the composition is skewed to basic and acidic residues. Residues 126-230 (KKQLMSSDVD…LEHVFIRGSK (105 aa)) constitute a DNA-binding region (TF-B3).

The protein localises to the nucleus. The protein is B3 domain-containing protein At1g20600 of Arabidopsis thaliana (Mouse-ear cress).